The following is a 204-amino-acid chain: Probable molybdenum cofactor guanylyltransferase (204 aa).

GTP-binding positions include 10-12 (LSG), Lys22, Asp75, and Asp104. Asp104 lines the Mg(2+) pocket.

Belongs to the MobA family. It depends on Mg(2+) as a cofactor.

The protein localises to the cytoplasm. The enzyme catalyses Mo-molybdopterin + GTP + H(+) = Mo-molybdopterin guanine dinucleotide + diphosphate. Its function is as follows. Transfers a GMP moiety from GTP to Mo-molybdopterin (Mo-MPT) cofactor (Moco or molybdenum cofactor) to form Mo-molybdopterin guanine dinucleotide (Mo-MGD) cofactor. The polypeptide is Probable molybdenum cofactor guanylyltransferase (Methanocaldococcus jannaschii (strain ATCC 43067 / DSM 2661 / JAL-1 / JCM 10045 / NBRC 100440) (Methanococcus jannaschii)).